The sequence spans 963 residues: Probable sucrose-phosphate synthase 2 (963 aa).

Residues 111–150 form a disordered region; that stretch reads KLRTDTNADMSEDLFEGEKGEDAGDPSVAYGDSTTGSSPK.

It belongs to the glycosyltransferase 1 family. As to quaternary structure, homodimer or homotetramer. Expressed in germinating seeds.

The catalysed reaction is beta-D-fructose 6-phosphate + UDP-alpha-D-glucose = sucrose 6(F)-phosphate + UDP + H(+). Its pathway is glycan biosynthesis; sucrose biosynthesis; sucrose from D-fructose 6-phosphate and UDP-alpha-D-glucose: step 1/2. Activity is regulated by phosphorylation and moderated by concentration of metabolites and light. Functionally, plays a role in photosynthetic sucrose synthesis by catalyzing the rate-limiting step of sucrose biosynthesis from UDP-glucose and fructose- 6-phosphate. Involved in the regulation of carbon partitioning in the leaves of plants. May regulate the synthesis of sucrose and therefore play a major role as a limiting factor in the export of photoassimilates out of the leaf. Plays a role for sucrose availability that is essential for plant growth and fiber elongation. This Oryza sativa subsp. japonica (Rice) protein is Probable sucrose-phosphate synthase 2 (SPS2).